The following is a 397-amino-acid chain: Plasma membrane iron permease (397 aa).

The next 4 membrane-spanning stretches (helical) occupy residues 61–81, 92–112, 177–197, and 292–312; these read FTAL…FYAL, IWEG…GFAM, AFPL…YFIY, and GSIL…FLMW. 2 positions are modified to phosphoserine: S337 and S338. The segment covering 337-346 has biased composition (polar residues); it reads SSHTPVQSSS. The segment at 337-364 is disordered; sequence SSHTPVQSSSSEDEFKINSPTDDKGDKA. Residue T340 is modified to Phosphothreonine. Residues S346, S347, and S355 each carry the phosphoserine modification. The span at 349–364 shows a compositional bias: basic and acidic residues; it reads DEFKINSPTDDKGDKA. T357 carries the phosphothreonine modification. Residues S374, S375, and S376 each carry the phosphoserine modification.

This sequence belongs to the oxidase-dependent Fe transporter (OFeT) (TC 9.A.10.1) family.

The protein resides in the membrane. Its function is as follows. Permease for high affinity iron uptake. The protein is Plasma membrane iron permease (fip1) of Schizosaccharomyces pombe (strain 972 / ATCC 24843) (Fission yeast).